We begin with the raw amino-acid sequence, 209 residues long: MSGRFIVLDGIDGCGKSTQLDHLLGWLPGSGLMPAGAELISTREPGGTPLGRSVRELLLHTRAEQAPAPTAELLLYAADRAQHVERLILPTLERGDWVISDRFSGSTMAYQGYGRGLDRQLIDQLERIATAGVQPDLTLWLTLPLEESLRRRQGDQADRIEAEGQVFLQRVIDGFAAIAEQRQWSAIAADRPPEAVSRALERELMDRLG.

10–17 is a binding site for ATP; it reads GIDGCGKS.

Belongs to the thymidylate kinase family.

The catalysed reaction is dTMP + ATP = dTDP + ADP. Phosphorylation of dTMP to form dTDP in both de novo and salvage pathways of dTTP synthesis. This Parasynechococcus marenigrum (strain WH8102) protein is Thymidylate kinase.